The primary structure comprises 123 residues: uncharacterized protein (123 aa).

The interval glutamate 76 to glycine 97 is disordered.

This is an uncharacterized protein from Saccharomyces cerevisiae (strain ATCC 204508 / S288c) (Baker's yeast).